Consider the following 259-residue polypeptide: Nodulation protein J (259 aa).

The ABC transmembrane type-2 domain occupies 30-256 (ASILGNLADP…LVSTALLRRR (227 aa)). A run of 6 helical transmembrane segments spans residues 32–52 (ILGN…GLGV), 64–84 (AFLA…FETI), 116–136 (AWAA…AAML), 141–161 (WLAL…FASL), 174–194 (YFIF…GAVF), and 228–248 (IANV…PFLV).

Belongs to the ABC-2 integral membrane protein family. Lipooligosaccharide exporter (TC 3.A.1.102) subfamily. The complex is composed of two ATP-binding proteins (NodI) and two transmembrane proteins (NodJ).

It is found in the cell inner membrane. Part of the ABC transporter complex NodIJ involved in the export of the nodulation factors (Nod factors), the bacterial signal molecules that induce symbiosis and subsequent nodulation induction. Nod factors are LCO (lipo-chitin oligosaccharide), a modified beta-1,4-linked N-acetylglucosamine oligosaccharide. This subunit encodes the transporter. The protein is Nodulation protein J (nodJ) of Rhizobium leguminosarum bv. viciae.